The following is a 316-amino-acid chain: Phosphate acyltransferase (316 aa).

Belongs to the PlsX family. In terms of assembly, homodimer. Probably interacts with PlsY.

It localises to the cytoplasm. It catalyses the reaction a fatty acyl-[ACP] + phosphate = an acyl phosphate + holo-[ACP]. Its pathway is lipid metabolism; phospholipid metabolism. Its function is as follows. Catalyzes the reversible formation of acyl-phosphate (acyl-PO(4)) from acyl-[acyl-carrier-protein] (acyl-ACP). This enzyme utilizes acyl-ACP as fatty acyl donor, but not acyl-CoA. The chain is Phosphate acyltransferase from Chlamydia caviae (strain ATCC VR-813 / DSM 19441 / 03DC25 / GPIC) (Chlamydophila caviae).